A 432-amino-acid polypeptide reads, in one-letter code: Putative D-alanyl-D-alanine carboxypeptidase (432 aa).

A helical; Signal-anchor membrane pass occupies residues 7–25; sequence ATVLLTFSLSAFAVEYPVL.

The protein belongs to the peptidase S12 family. YfeW subfamily.

It is found in the cell inner membrane. It catalyses the reaction Preferential cleavage: (Ac)2-L-Lys-D-Ala-|-D-Ala. Also transpeptidation of peptidyl-alanyl moieties that are N-acyl substituents of D-alanine.. The chain is Putative D-alanyl-D-alanine carboxypeptidase from Salmonella schwarzengrund (strain CVM19633).